Reading from the N-terminus, the 807-residue chain is Ribosome-releasing factor 2, mitochondrial (807 aa).

The transit peptide at 1–18 (MFCRKYVFQTWKQLSRSY) directs the protein to the mitochondrion. The 289-residue stretch at 27–315 (AKTRNIGIIA…GITKYLPSPL (289 aa)) folds into the tr-type G domain. GTP-binding positions include 36 to 43 (AHIDAGKT), 100 to 104 (DTPGH), and 154 to 157 (NKMD).

Belongs to the TRAFAC class translation factor GTPase superfamily. Classic translation factor GTPase family. EF-G/EF-2 subfamily.

Its subcellular location is the mitochondrion. In terms of biological role, mitochondrial GTPase that mediates the disassembly of ribosomes from messenger RNA at the termination of mitochondrial protein biosynthesis. Not involved in the GTP-dependent ribosomal translocation step during translation elongation. In Candida albicans (strain SC5314 / ATCC MYA-2876) (Yeast), this protein is Ribosome-releasing factor 2, mitochondrial.